A 103-amino-acid chain; its full sequence is Ig kappa-b4 chain C region (103 aa).

The Ig-like domain occupies 5–95 (PTVLIFPPAA…KVTQGTTSVV (91 aa)). Residues Cys26 and Cys85 are joined by a disulfide bond.

The protein is Ig kappa-b4 chain C region of Oryctolagus cuniculus (Rabbit).